The chain runs to 618 residues: Membrane protein insertase YidC (618 aa).

Helical transmembrane passes span 3–23 (KNTITGLVLIGILLVGFSFLS), 363–383 (WGLSMGIVLLLLTIMVKIVVF), 439–459 (LPMLLQFPILMALFMFVPSAI), 478–498 (FITFPFHIPFLGNHLSLFCLL), 520–540 (PQMAAMKWMMYLMPIMFLFVL), and 545–565 (SGLNYYYFISTLISVVTMIIL).

This sequence belongs to the OXA1/ALB3/YidC family. Type 1 subfamily. In terms of assembly, interacts with the Sec translocase complex via SecD. Specifically interacts with transmembrane segments of nascent integral membrane proteins during membrane integration.

It localises to the cell inner membrane. In terms of biological role, required for the insertion and/or proper folding and/or complex formation of integral membrane proteins into the membrane. Involved in integration of membrane proteins that insert both dependently and independently of the Sec translocase complex, as well as at least some lipoproteins. Aids folding of multispanning membrane proteins. The protein is Membrane protein insertase YidC of Bacteroides fragilis (strain ATCC 25285 / DSM 2151 / CCUG 4856 / JCM 11019 / LMG 10263 / NCTC 9343 / Onslow / VPI 2553 / EN-2).